The sequence spans 1365 residues: Nuclear pore complex protein Nup154 (1365 aa).

Residues 1-508 form a required for binding to Nup93-1 and anchoring to the nuclear pore complex region; sequence MTLPQAQLDF…GTHIIEVLKM (508 aa). Positions 508–986 are required for binding to chromatin; it reads MVDVLRQILL…KSINPLKGTA (479 aa).

It belongs to the non-repetitive/WGA-negative nucleoporin family. As to quaternary structure, interacts (via N-terminus) with Nup93-1. Interacts with Nup35. Interacts with cup.

Its subcellular location is the nucleus. It localises to the nuclear pore complex. It is found in the chromosome. The protein localises to the nucleus membrane. The protein resides in the cytoplasm. Its function is as follows. Component of the nuclear pore complex. Has a role in the organization of the inner nuclear membrane proteins at the nuclear envelope. In germ cells, plays a role in the nuclear localization of components of the dpp signaling pathways, such as Medea and phosphorylated Mad. Binds to chromatin, and together with Nup62 and Nup93-1, contributes to karyosome morphology and chromatin organization including attachment to the nuclear envelope in oocytes and nurse cells. Has a role in female fertility including egg chamber development; in nurse cells, has a role in the organization of F-actin in subcortical and cytoplasmic actin filaments important for the transfer of cytoplasm from nurse cells to the growing oocytes. Has a role in male spermatogenesis and fertility. Has a role in germ line cell proliferation. The polypeptide is Nuclear pore complex protein Nup154 (Drosophila melanogaster (Fruit fly)).